A 366-amino-acid chain; its full sequence is Mitogen-activated protein kinase 13 (366 aa).

Residues tyrosine 25–phenylalanine 308 enclose the Protein kinase domain. Isoleucine 31–valine 39 contacts ATP. Serine 47 carries the post-translational modification Phosphoserine. An ATP-binding site is contributed by lysine 54. The Proton acceptor role is filled by aspartate 150. Position 180 is a phosphothreonine; by MAP2K3, MAP2K4, MAP2K6 and MAP2K7 (threonine 180). The short motif at threonine 180–tyrosine 182 is the TXY element. Tyrosine 182 carries the post-translational modification Phosphotyrosine; by MAP2K3, MAP2K4, MAP2K6 and MAP2K7. Serine 350 bears the Phosphoserine mark.

The protein belongs to the protein kinase superfamily. CMGC Ser/Thr protein kinase family. MAP kinase subfamily. As to quaternary structure, interacts with MAPK8IP2. The cofactor is Mg(2+). In terms of processing, dually phosphorylated on Thr-180 and Tyr-182 by MAP2K3/MKK3, MAP2K4/MKK4, MAP2K6/MKK6 and MAP2K7/MKK7, which activates the enzyme. Dephosphorylated by dual specificity phosphatase DUSP1.

The enzyme catalyses L-seryl-[protein] + ATP = O-phospho-L-seryl-[protein] + ADP + H(+). It catalyses the reaction L-threonyl-[protein] + ATP = O-phospho-L-threonyl-[protein] + ADP + H(+). Activated by phosphorylation on threonine and tyrosine by dual specificity kinases, MAP2K3/MKK3 MAP2K6/MKK6, MAP2K4/MKK4 and MAP2K7/MKK7. Activation by ultraviolet radiation, hyperosmotic shock, anisomycin or by TNF-alpha is mediated by MAP2K3/MKK3. Inhibited by dual specificity phosphatase DUSP1. Serine/threonine kinase which acts as an essential component of the MAP kinase signal transduction pathway. MAPK13 is one of the four p38 MAPKs which play an important role in the cascades of cellular responses evoked by extracellular stimuli such as pro-inflammatory cytokines or physical stress leading to direct activation of transcription factors such as ELK1 and ATF2. Accordingly, p38 MAPKs phosphorylate a broad range of proteins and it has been estimated that they may have approximately 200 to 300 substrates each. MAPK13 is one of the less studied p38 MAPK isoforms. Some of the targets are downstream kinases such as MAPKAPK2, which are activated through phosphorylation and further phosphorylate additional targets. Plays a role in the regulation of protein translation by phosphorylating and inactivating EEF2K. Involved in cytoskeletal remodeling through phosphorylation of MAPT and STMN1. Mediates UV irradiation induced up-regulation of the gene expression of CXCL14. Plays an important role in the regulation of epidermal keratinocyte differentiation, apoptosis and skin tumor development. Phosphorylates the transcriptional activator MYB in response to stress which leads to rapid MYB degradation via a proteasome-dependent pathway. MAPK13 also phosphorylates and down-regulates PRKD1 during regulation of insulin secretion in pancreatic beta cells. This chain is Mitogen-activated protein kinase 13 (MAPK13), found in Bos taurus (Bovine).